A 202-amino-acid chain; its full sequence is Polyamine-modulated factor 1 (202 aa).

A compositionally biased stretch (basic and acidic residues) spans 1-15 (MAEVSRDSEAAERGP). The segment at 1–26 (MAEVSRDSEAAERGPEGSSPEAVPGD) is disordered. A coiled-coil region spans residues 153 to 194 (EAKNQELADAVLAGRRQVEELQQQVRALQQTWQALHREQREL).

In terms of assembly, component of the MIS12 complex composed of MIS12, DSN1, NSL1 and PMF1. Interacts with COPS7A. Interacts via its coiled-coil domain with the leucine-zipper domain of NFE2L2. The interaction with NFE2L2 is required for the transcriptional regulation of SSAT.

It is found in the nucleus. The protein resides in the chromosome. It localises to the centromere. Its subcellular location is the kinetochore. Functionally, part of the MIS12 complex which is required for normal chromosome alignment and segregation and for kinetochore formation during mitosis. May act as a cotranscription partner of NFE2L2 involved in regulation of polyamine-induced transcription of SSAT. The polypeptide is Polyamine-modulated factor 1 (Mus musculus (Mouse)).